Here is a 248-residue protein sequence, read N- to C-terminus: Orotidine 5'-phosphate decarboxylase (248 aa).

Residues Asp-22, Lys-44, 71 to 80 (DLKFHDIPNT), Thr-131, Arg-192, Gln-201, Gly-221, and Arg-222 each bind substrate. Lys-73 functions as the Proton donor in the catalytic mechanism.

Belongs to the OMP decarboxylase family. Type 1 subfamily. As to quaternary structure, homodimer.

It catalyses the reaction orotidine 5'-phosphate + H(+) = UMP + CO2. Its pathway is pyrimidine metabolism; UMP biosynthesis via de novo pathway; UMP from orotate: step 2/2. Its function is as follows. Catalyzes the decarboxylation of orotidine 5'-monophosphate (OMP) to uridine 5'-monophosphate (UMP). The sequence is that of Orotidine 5'-phosphate decarboxylase from Photorhabdus laumondii subsp. laumondii (strain DSM 15139 / CIP 105565 / TT01) (Photorhabdus luminescens subsp. laumondii).